The sequence spans 729 residues: Fatty acid oxidation complex subunit alpha (729 aa).

An enoyl-CoA hydratase/isomerase region spans residues 1 to 189; that stretch reads MLYKGDTLYL…KIGLVDGVVK (189 aa). Asp296 is a substrate binding site. Positions 311–729 are 3-hydroxyacyl-CoA dehydrogenase; it reads ETPKQAAVLG…ARPVGDLKTA (419 aa). Residues Met324, Asp343, 400–402, Lys407, and Ser429 contribute to the NAD(+) site; that span reads VVE. His450 (for 3-hydroxyacyl-CoA dehydrogenase activity) is an active-site residue. Asn453 contacts NAD(+). Asn500 and Tyr660 together coordinate substrate. Residues 707–729 are disordered; sequence ARHNEPYYPPVEPARPVGDLKTA.

The protein in the N-terminal section; belongs to the enoyl-CoA hydratase/isomerase family. In the C-terminal section; belongs to the 3-hydroxyacyl-CoA dehydrogenase family. Heterotetramer of two alpha chains (FadB) and two beta chains (FadA).

It carries out the reaction a (3S)-3-hydroxyacyl-CoA + NAD(+) = a 3-oxoacyl-CoA + NADH + H(+). It catalyses the reaction a (3S)-3-hydroxyacyl-CoA = a (2E)-enoyl-CoA + H2O. The catalysed reaction is a 4-saturated-(3S)-3-hydroxyacyl-CoA = a (3E)-enoyl-CoA + H2O. The enzyme catalyses (3S)-3-hydroxybutanoyl-CoA = (3R)-3-hydroxybutanoyl-CoA. It carries out the reaction a (3Z)-enoyl-CoA = a 4-saturated (2E)-enoyl-CoA. It catalyses the reaction a (3E)-enoyl-CoA = a 4-saturated (2E)-enoyl-CoA. Its pathway is lipid metabolism; fatty acid beta-oxidation. Functionally, involved in the aerobic and anaerobic degradation of long-chain fatty acids via beta-oxidation cycle. Catalyzes the formation of 3-oxoacyl-CoA from enoyl-CoA via L-3-hydroxyacyl-CoA. It can also use D-3-hydroxyacyl-CoA and cis-3-enoyl-CoA as substrate. This is Fatty acid oxidation complex subunit alpha from Escherichia coli O6:K15:H31 (strain 536 / UPEC).